Reading from the N-terminus, the 165-residue chain is Chorismate pyruvate-lyase (165 aa).

Met35, Arg77, Leu115, and Glu156 together coordinate substrate.

Belongs to the UbiC family. As to quaternary structure, monomer.

Its subcellular location is the cytoplasm. It carries out the reaction chorismate = 4-hydroxybenzoate + pyruvate. Its pathway is cofactor biosynthesis; ubiquinone biosynthesis. Functionally, removes the pyruvyl group from chorismate, with concomitant aromatization of the ring, to provide 4-hydroxybenzoate (4HB) for the ubiquinone pathway. This Escherichia coli (strain K12 / MC4100 / BW2952) protein is Chorismate pyruvate-lyase.